The following is a 120-amino-acid chain: Peptidyl-tRNA hydrolase (120 aa).

The protein belongs to the PTH2 family.

The protein resides in the cytoplasm. The enzyme catalyses an N-acyl-L-alpha-aminoacyl-tRNA + H2O = an N-acyl-L-amino acid + a tRNA + H(+). Its function is as follows. The natural substrate for this enzyme may be peptidyl-tRNAs which drop off the ribosome during protein synthesis. The protein is Peptidyl-tRNA hydrolase of Saccharolobus islandicus (strain Y.N.15.51 / Yellowstone #2) (Sulfolobus islandicus).